A 127-amino-acid chain; its full sequence is Aspartate 1-decarboxylase (127 aa).

S25 serves as the catalytic Schiff-base intermediate with substrate; via pyruvic acid. S25 is modified (pyruvic acid (Ser)). A substrate-binding site is contributed by T57. Y58 functions as the Proton donor in the catalytic mechanism. 73 to 75 contributes to the substrate binding site; it reads GAA.

Belongs to the PanD family. In terms of assembly, heterooctamer of four alpha and four beta subunits. Requires pyruvate as cofactor. Post-translationally, is synthesized initially as an inactive proenzyme, which is activated by self-cleavage at a specific serine bond to produce a beta-subunit with a hydroxyl group at its C-terminus and an alpha-subunit with a pyruvoyl group at its N-terminus.

The protein localises to the cytoplasm. It catalyses the reaction L-aspartate + H(+) = beta-alanine + CO2. The protein operates within cofactor biosynthesis; (R)-pantothenate biosynthesis; beta-alanine from L-aspartate: step 1/1. Functionally, catalyzes the pyruvoyl-dependent decarboxylation of aspartate to produce beta-alanine. The chain is Aspartate 1-decarboxylase from Exiguobacterium sibiricum (strain DSM 17290 / CCUG 55495 / CIP 109462 / JCM 13490 / 255-15).